A 201-amino-acid polypeptide reads, in one-letter code: uncharacterized protein (201 aa).

This sequence belongs to the mimivirus L885/R898 family.

This is an uncharacterized protein from Acanthamoeba polyphaga (Amoeba).